Consider the following 319-residue polypeptide: Serpentine receptor class X-43 (319 aa).

7 helical membrane passes run 28-48 (VVSM…IGCF), 67-87 (AQLM…LLNI), 95-115 (YLFG…FLLM), 138-158 (IRTF…YLVV), 164-184 (FVFY…CGTL), 194-214 (TVLS…LMAF), and 267-287 (FFFT…VVVF).

It belongs to the G-protein coupled receptor 1 family. Expressed in ASI sensory neurons.

It localises to the cell membrane. The protein resides in the perikaryon. The protein localises to the cell projection. It is found in the cilium. In terms of biological role, receptor for the ascaroside pheromone icas#9 which suppresses exploratory forgaging behavior. In response to ascaroside icas#9, may furthermore play a role in the expression of genes in the TGF-beta signaling pathway, such as daf-7, and in insulin signaling pathway, such as daf-28, which may in turn contribute to exploratory behavior. This chain is Serpentine receptor class X-43, found in Caenorhabditis elegans.